The chain runs to 358 residues: COP9 signalosome complex subunit 5b (358 aa).

At Met1 the chain carries N-acetylmethionine. One can recognise an MPN domain in the interval 59-196; the sequence is VKISALALLK…IGAFRTYSKG (138 aa). The Zn(2+) site is built by His142, His144, and Asp155. The JAMM motif motif lies at 142–155; it reads HSHPGYGCWLSGID. Positions 338–349 are enriched in polar residues; it reads MRQSNNKSPTDS. The disordered stretch occupies residues 338–358; sequence MRQSNNKSPTDSSDPDPMITY.

Belongs to the peptidase M67A family. CSN5 subfamily. Component of the CSN complex, probably composed of CSN1, CSN2, CSN3, CSN4, CSN5 (CSN5A or CSN5B), CSN6 (CSN6A or CSN6B), CSN7 and CSN8. CSN5A or CSN5B are present within distinct CSN complexes each containing only one copy of CSN5. Interacts with itself. In the complex, it is located in the center and probably interacts directly with CSN4 and CSN6A or CSN6B. Also exists as monomeric form. Interacts with CYT1 in vitro and in planta. Interacts with FLZ3. It depends on a divalent metal cation as a cofactor. Ubiquitously expressed. Highly expressed in flowers and roots. Expressed at lower level in seedlings and siliques.

The protein resides in the cytoplasm. The protein localises to the nucleus. In terms of biological role, probable protease subunit of the COP9 signalosome complex (CSN), a complex involved in various cellular and developmental processes such as photomorphogenesis and auxin and jasmonate responses. The CSN complex is an essential regulator of the ubiquitin (Ubl) conjugation pathway by mediating the deneddylation of the cullin subunits of the SCF-type E3 ligase complexes, leading to decrease the Ubl ligase activity of SCF. In the complex, it probably acts as the catalytic center that mediates the cleavage of Nedd8 from cullins. It however has no metalloprotease activity by itself and requires the other subunits of the CSN complex. The CSN complex is involved in repression of photomorphogenesis in darkness by regulating the activity of COP1-containing Ubl ligase complexes. The complex is also required for degradation of PSIAA6 by regulating the activity of the Ubl ligase SCF-TIR complex. Not involved in CSN's deneddylation/derubylation activity. Essential for the structural integrity of the CSN holocomplex. This chain is COP9 signalosome complex subunit 5b, found in Arabidopsis thaliana (Mouse-ear cress).